Here is a 1457-residue protein sequence, read N- to C-terminus: Receptor-type tyrosine-protein phosphatase kappa (1457 aa).

An N-terminal signal peptide occupies residues 1–25 (MDVAAAALPAFVALWLLYPWPLLGS). Residues 26 to 752 (ALGQFSAGGC…PAKQTDRVVK (727 aa)) are Extracellular-facing. Positions 30-193 (FSAGGCTFDD…IQVLSYPCDK (164 aa)) constitute an MAM domain. 3 N-linked (GlcNAc...) asparagine glycosylation sites follow: N100, N139, and N210. The Ig-like C2-type domain maps to 195-280 (PHFLRLGDVE…TQSERGSGVS (86 aa)). A disulfide bridge connects residues C215 and C269. Fibronectin type-III domains are found at residues 293-388 (PIAP…CAEP), 391-487 (TPKT…TDED), 490-594 (GPVP…SAPS), and 595-688 (LPDY…TVGD). N415, N423, N435, N461, N551, N585, N589, N606, and N689 each carry an N-linked (GlcNAc...) asparagine glycan. Residues 753 to 774 (IAGISAGILVFILLLLVVIVIV) form a helical membrane-spanning segment. Topologically, residues 775-1457 (KKSKLAKKRK…DVALEYLESS (683 aa)) are cytoplasmic. S868 bears the Phosphoserine mark. 2 Tyrosine-protein phosphatase domains span residues 899-1159 (FKEE…ILEA) and 1191-1453 (LKDE…ALEY). Residues D1068, 1100–1106 (CSAGAGR), and Q1144 each bind substrate. C1100 (phosphocysteine intermediate) is an active-site residue. Catalysis depends on C1394, which acts as the Phosphocysteine intermediate.

Belongs to the protein-tyrosine phosphatase family. Receptor class 2B subfamily. In terms of processing, this protein undergoes proteolytic processing. As to expression, high levels in liver and kidney. Lower levels in lung, brain and heart. Not seen in spleen and testis.

The protein resides in the membrane. It carries out the reaction O-phospho-L-tyrosyl-[protein] + H2O = L-tyrosyl-[protein] + phosphate. Functionally, regulation of processes involving cell contact and adhesion such as growth control, tumor invasion, and metastasis. Negative regulator of EGFR signaling pathway. Forms complexes with beta-catenin and gamma-catenin/plakoglobin. Beta-catenin may be a substrate for the catalytic activity of PTPRK/PTP-kappa. In Mus musculus (Mouse), this protein is Receptor-type tyrosine-protein phosphatase kappa (Ptprk).